A 542-amino-acid chain; its full sequence is Adenosylmethionine-8-amino-7-oxononanoate aminotransferase (542 aa).

Position 170-171 (G170–S171) interacts with pyridoxal 5'-phosphate. Y205 lines the substrate pocket. D311 is a binding site for pyridoxal 5'-phosphate. K340, G375, and R470 together coordinate substrate. At K340 the chain carries N6-(pyridoxal phosphate)lysine. The tract at residues D509–V542 is disordered. Residues K515–D524 show a composition bias toward basic and acidic residues.

Belongs to the class-III pyridoxal-phosphate-dependent aminotransferase family. BioA subfamily. As to quaternary structure, homodimer. Requires pyridoxal 5'-phosphate as cofactor.

Its subcellular location is the cytoplasm. It catalyses the reaction (8S)-8-amino-7-oxononanoate + S-adenosyl-L-methionine = S-adenosyl-4-methylsulfanyl-2-oxobutanoate + (7R,8S)-7,8-diammoniononanoate. It participates in cofactor biosynthesis; biotin biosynthesis; 7,8-diaminononanoate from 8-amino-7-oxononanoate (SAM route): step 1/1. Catalyzes the transfer of the alpha-amino group from S-adenosyl-L-methionine (SAM) to 7-keto-8-aminopelargonic acid (KAPA) to form 7,8-diaminopelargonic acid (DAPA). It is the only aminotransferase known to utilize SAM as an amino donor. The protein is Adenosylmethionine-8-amino-7-oxononanoate aminotransferase of Nitratidesulfovibrio vulgaris (strain ATCC 29579 / DSM 644 / CCUG 34227 / NCIMB 8303 / VKM B-1760 / Hildenborough) (Desulfovibrio vulgaris).